A 357-amino-acid polypeptide reads, in one-letter code: Alanine racemase (357 aa).

The Proton acceptor; specific for D-alanine role is filled by lysine 33. Lysine 33 is subject to N6-(pyridoxal phosphate)lysine. A substrate-binding site is contributed by arginine 129. The active-site Proton acceptor; specific for L-alanine is the tyrosine 253. Position 301 (methionine 301) interacts with substrate.

This sequence belongs to the alanine racemase family. Requires pyridoxal 5'-phosphate as cofactor.

It catalyses the reaction L-alanine = D-alanine. The protein operates within amino-acid biosynthesis; D-alanine biosynthesis; D-alanine from L-alanine: step 1/1. Catalyzes the interconversion of L-alanine and D-alanine. May also act on other amino acids. The chain is Alanine racemase (alr) from Pseudomonas savastanoi pv. phaseolicola (strain 1448A / Race 6) (Pseudomonas syringae pv. phaseolicola (strain 1448A / Race 6)).